Reading from the N-terminus, the 60-residue chain is uncharacterized protein (60 aa).

The helical transmembrane segment at 33–55 (FRLLRGIFLITLVIWTVVWLKLL) threads the bilayer.

The protein belongs to the HHV-5 UL2 protein family.

It localises to the host membrane. This is an uncharacterized protein from Human cytomegalovirus (strain AD169) (HHV-5).